The primary structure comprises 698 residues: MADRRRQRASQDTEDEESGASGSDSGSPARGGGSCSGSVGGGGSGSLPSQRGGRGGGLHLRRVESGGAKSAEESECESEDGMEGDAVLSDYESAEDSEGEEDYSEEENSKVELKSEANDAADSSAKEKGEEKPESKGTVTGERQSGDGQESTEPVENKVGKKGPKHLDDDEDRKNPAYIPRKGLFFEHDLRGQTQEEEVRPKGRQRKLWKDEGRWEHDKFREDEQAPKSRQELIALYGYDIRSAHNPDDIKPRRIRKPRFGSSPQRDPNWIGDRSSKSHRHQGPGGNLPPRTFINRNTAGTGRMSASRNYSRSGGFKDGRTSFRPVEVAGQHGGRSAETLKHEASYRSRRLEQTPVRDPSPEPDAPLLGSPEKEEVASETPAAVPDITPPAPDRPIEKKSYSRARRTRTKVGDAVKAAEEVPPPSEGLASTATVPETTPAAKTGNWEAPVDSTTGGLEQDVAQLNIAEQSWSPSQPSFLQPRELRGVPNHIHMGAGPPPQFNRMEEMGVQSGRAKRYSSQRQRPVPEPPAPPVHISIMEGHYYDPLQFQGPIYTHGDSPAPLPPQGMIVQPEMHLPHPGLHPHQSPGPLPNPGLYPPPVSMSPGQPPPQQLLAPTYFSAPGVMNFGNPNYPYAPGALPPPPPPHLYPNTQAPPQVYGGVTYYNPAQQQVQPKPSPPRRTPQPVSIKPPPPEVVSRGSS.

Disordered regions lie at residues 1–229 and 241–457; these read MADR…APKS and IRSA…TGGL. Over residues 19–28 the composition is skewed to low complexity; that stretch reads GASGSDSGSP. The segment covering 29 to 45 has biased composition (gly residues); the sequence is ARGGGSCSGSVGGGGSG. Residue S34 is modified to Phosphoserine. Acidic residues-rich tracts occupy residues 73–83 and 92–106; these read ESECESEDGME and ESAE…YSEE. Residues 98-127 are a coiled coil; that stretch reads EGEEDYSEEENSKVELKSEANDAADSSAKE. 2 stretches are compositionally biased toward basic and acidic residues: residues 107–117 and 124–135; these read ENSKVELKSEA and SAKEKGEEKPES. Position 115 is a phosphoserine (S115). The segment at 134 to 280 is necessary for RNA-binding, interaction with MAGOH and localization in nucleus speckles; sequence ESKGTVTGER…IGDRSSKSHR (147 aa). Residues 134–280 form a sufficient to form the EJC region; the sequence is ESKGTVTGER…IGDRSSKSHR (147 aa). Residues 137–154 show a composition bias toward polar residues; it reads GTVTGERQSGDGQESTEP. Phosphoserine is present on S145. The segment covering 155–175 has biased composition (basic and acidic residues); sequence VENKVGKKGPKHLDDDEDRKN. The short motif at 201-207 is the Nuclear localization signal 1 element; the sequence is PKGRQRK. Composition is skewed to basic and acidic residues over residues 208-229 and 242-252; these read LWKD…APKS and RSAHNPDDIKP. Positions 251–259 match the Nuclear localization signal 2 motif; the sequence is KPRRIRKPR. Phosphoserine is present on residues S262 and S263. Positions 294 to 312 are enriched in polar residues; the sequence is INRNTAGTGRMSASRNYSR. Basic and acidic residues predominate over residues 338-352; it reads ETLKHEASYRSRRLE. T354 bears the Phosphothreonine mark. 2 positions are modified to phosphoserine: S360 and S370. The segment at 374-698 is necessary for localization in cytoplasmic stress granules; that stretch reads EEVASETPAA…PPEVVSRGSS (325 aa). Positions 410 to 419 are enriched in basic and acidic residues; sequence KVGDAVKAAE. A Nuclear export signal motif is present at residues 457–466; the sequence is LEQDVAQLNI. S472 is subject to Phosphoserine. Disordered stretches follow at residues 488–533, 575–614, and 629–698; these read PNHI…APPV, LPHP…LLAP, and NYPY…RGSS. Composition is skewed to pro residues over residues 585 to 609, 636 to 645, and 672 to 691; these read SPGP…PPPQ, ALPPPPPPHL, and KPSP…PPPE.

The protein belongs to the CASC3 family. In terms of assembly, identified in the spliceosome C complex. Component of the mRNA splicing-dependent exon junction complex (EJC), which contains at least CASC3, EIF4A3, MAGOH, NXF1 and RBM8A/Y14. Identified in a complex composed of the EJC core, UPF3B and UPF2. The EJC core can also interact with UPF3A (in vitro). Forms homooligomers. Interacts with STAU in an RNA-dependent manner. Interacts with DHX34; the interaction is RNA-independent. In terms of processing, ADP-ribosylated by tankyrase TNKS and TNKS2. Poly-ADP-ribosylated protein is recognized by RNF146, followed by ubiquitination. Post-translationally, ubiquitinated by RNF146 when poly-ADP-ribosylated, leading to its degradation. High levels in heart, brain, including hippocampus and cerebellum, liver, kidney and testis; lower levels in muscle, lung and spleen.

The protein localises to the cytoplasm. The protein resides in the perinuclear region. It is found in the nucleus. It localises to the nucleus speckle. Its subcellular location is the stress granule. The protein localises to the cytoplasmic ribonucleoprotein granule. The protein resides in the cell projection. It is found in the dendrite. Its function is as follows. Required for pre-mRNA splicing as component of the spliceosome. Core component of the splicing-dependent multiprotein exon junction complex (EJC) deposited at splice junctions on mRNAs. The EJC is a dynamic structure consisting of core proteins and several peripheral nuclear and cytoplasmic associated factors that join the complex only transiently either during EJC assembly or during subsequent mRNA metabolism. The EJC marks the position of the exon-exon junction in the mature mRNA for the gene expression machinery and the core components remain bound to spliced mRNAs throughout all stages of mRNA metabolism thereby influencing downstream processes including nuclear mRNA export, subcellular mRNA localization, translation efficiency and nonsense-mediated mRNA decay (NMD). Stimulates the ATPase and RNA-helicase activities of EIF4A3. Plays a role in the stress response by participating in cytoplasmic stress granules assembly and by favoring cell recovery following stress. Component of the dendritic ribonucleoprotein particles (RNPs) in hippocampal neurons. May play a role in mRNA transport. Binds spliced mRNA in sequence-independent manner, 20-24 nucleotides upstream of mRNA exon-exon junctions. Binds poly(G) and poly(U) RNA homomer. This chain is Protein CASC3 (Casc3), found in Mus musculus (Mouse).